We begin with the raw amino-acid sequence, 116 residues long: S-adenosylmethionine decarboxylase proenzyme (116 aa).

The Schiff-base intermediate with substrate; via pyruvic acid role is filled by Ser63. Residue Ser63 is modified to Pyruvic acid (Ser); by autocatalysis. The active-site Proton acceptor; for processing activity is His68. Cys83 functions as the Proton donor; for catalytic activity in the catalytic mechanism.

The protein belongs to the prokaryotic AdoMetDC family. Type 1 subfamily. As to quaternary structure, heterotetramer of two alpha and two beta chains arranged as a dimer of alpha/beta heterodimers. Requires pyruvate as cofactor. In terms of processing, is synthesized initially as an inactive proenzyme. Formation of the active enzyme involves a self-maturation process in which the active site pyruvoyl group is generated from an internal serine residue via an autocatalytic post-translational modification. Two non-identical subunits are generated from the proenzyme in this reaction, and the pyruvate is formed at the N-terminus of the alpha chain, which is derived from the carboxyl end of the proenzyme. The post-translation cleavage follows an unusual pathway, termed non-hydrolytic serinolysis, in which the side chain hydroxyl group of the serine supplies its oxygen atom to form the C-terminus of the beta chain, while the remainder of the serine residue undergoes an oxidative deamination to produce ammonia and the pyruvoyl group blocking the N-terminus of the alpha chain.

It catalyses the reaction S-adenosyl-L-methionine + H(+) = S-adenosyl 3-(methylsulfanyl)propylamine + CO2. It functions in the pathway amine and polyamine biosynthesis; S-adenosylmethioninamine biosynthesis; S-adenosylmethioninamine from S-adenosyl-L-methionine: step 1/1. Functionally, catalyzes the decarboxylation of S-adenosylmethionine to S-adenosylmethioninamine (dcAdoMet), the propylamine donor required for the synthesis of the polyamines spermine and spermidine from the diamine putrescine. The polypeptide is S-adenosylmethionine decarboxylase proenzyme (Clostridium botulinum (strain Okra / Type B1)).